The primary structure comprises 350 residues: Serpentine receptor class beta-12 (350 aa).

The Extracellular segment spans residues 1–21 (MSEANLTECELAYQLTYHPFY). Asn5 is a glycosylation site (N-linked (GlcNAc...) asparagine). A helical transmembrane segment spans residues 22 to 42 (MIAQFWSFFVSLLAMPSLIFF). Residues 43-57 (MVEKVFKLPFHGNLK) lie on the Cytoplasmic side of the membrane. The chain crosses the membrane as a helical span at residues 58–78 (FLLVSYFIGTFLFASIICFTF). Topologically, residues 79 to 103 (GYHFFVPFFVTSNCDLIINATLFKY) are extracellular. The N-linked (GlcNAc...) asparagine glycan is linked to Asn97. The helical transmembrane segment at 104–124 (GHMIALIFMTIPMILPTAFTV) threads the bilayer. Residues 125–141 (ERFVALKMAHSYEHVRT) lie on the Cytoplasmic side of the membrane. Residues 142-162 (LLGPVLVLVVIAIDSMFLYDI) traverse the membrane as a helical segment. Residues 163–189 (YGQEKFDKPFINFILVPATSALQFNSF) lie on the Extracellular side of the membrane. A helical transmembrane segment spans residues 190–210 (LWYMLYLKITNFICNLILLFI). Residues 211 to 243 (HKILHQSSRYRRKNVSLSVKYEMQEISQSSRFT) are Cytoplasmic-facing. Residues 244–264 (LIVTFTHLLFFGWYVSTILLI) form a helical membrane-spanning segment. At 265-282 (RTVGPDFFRGFINYTVMR) the chain is on the extracellular side. Asn277 is a glycosylation site (N-linked (GlcNAc...) asparagine). The helical transmembrane segment at 283–303 (GVYCATPTYNLVIVFIGFKAL) threads the bilayer. Residues 304 to 350 (NHLNFKRNNKVQSTIQIKSTGQEGAENYDNAISNYWDSVYTMNKSKL) lie on the Cytoplasmic side of the membrane.

It belongs to the nematode receptor-like protein srb family. In terms of tissue distribution, expressed throughout the head.

It is found in the cell membrane. The protein resides in the perikaryon. Its subcellular location is the cell projection. It localises to the dendrite. Its function is as follows. G-protein coupled receptor. Plays a role in the navigational capacity of sperm and promotes the targeting of sperm derived from males to the fertilization site in the uterus of hermaphrodites. This Caenorhabditis elegans protein is Serpentine receptor class beta-12.